Reading from the N-terminus, the 493-residue chain is 3-octaprenyl-4-hydroxybenzoate carboxy-lyase (493 aa).

Residue Asn-172 participates in Mn(2+) binding. Prenylated FMN is bound by residues 175-177 (IYR), 189-191 (RWL), and 194-195 (RG). Glu-238 is a Mn(2+) binding site. The active-site Proton donor is the Asp-287.

The protein belongs to the UbiD family. Homohexamer. Requires prenylated FMN as cofactor. Mn(2+) serves as cofactor.

The protein resides in the cell membrane. It carries out the reaction a 4-hydroxy-3-(all-trans-polyprenyl)benzoate + H(+) = a 2-(all-trans-polyprenyl)phenol + CO2. It participates in cofactor biosynthesis; ubiquinone biosynthesis. Catalyzes the decarboxylation of 3-octaprenyl-4-hydroxy benzoate to 2-octaprenylphenol, an intermediate step in ubiquinone biosynthesis. This is 3-octaprenyl-4-hydroxybenzoate carboxy-lyase from Shewanella denitrificans (strain OS217 / ATCC BAA-1090 / DSM 15013).